The primary structure comprises 526 residues: NAD(P)H-quinone oxidoreductase subunit 2 (526 aa).

14 helical membrane passes run 16-36, 43-63, 80-100, 110-130, 133-153, 168-188, 212-232, 246-266, 280-300, 308-328, 336-356, 380-400, 402-422, and 468-488; these read ILPE…DLIL, WTPY…YTQW, LSIA…LMSV, LGEF…LSGA, LVMI…LTGY, LLIG…LYGL, LALV…ISAV, PTPV…ALAI, WHFV…VVAL, LLAY…LANT, IFYL…VILF, LGLS…GFFG, IYLF…LGLI, and VGLI…NPLF.

The protein belongs to the complex I subunit 2 family. In terms of assembly, NDH-1 can be composed of about 15 different subunits; different subcomplexes with different compositions have been identified which probably have different functions.

It is found in the cellular thylakoid membrane. It carries out the reaction a plastoquinone + NADH + (n+1) H(+)(in) = a plastoquinol + NAD(+) + n H(+)(out). It catalyses the reaction a plastoquinone + NADPH + (n+1) H(+)(in) = a plastoquinol + NADP(+) + n H(+)(out). Functionally, NDH-1 shuttles electrons from an unknown electron donor, via FMN and iron-sulfur (Fe-S) centers, to quinones in the respiratory and/or the photosynthetic chain. The immediate electron acceptor for the enzyme in this species is believed to be plastoquinone. Couples the redox reaction to proton translocation, and thus conserves the redox energy in a proton gradient. Cyanobacterial NDH-1 also plays a role in inorganic carbon-concentration. The chain is NAD(P)H-quinone oxidoreductase subunit 2 from Trichodesmium erythraeum (strain IMS101).